Consider the following 149-residue polypeptide: Golgi apparatus membrane protein tvp-18 (149 aa).

Asn-11 carries an N-linked (GlcNAc...) asparagine glycan. 4 consecutive transmembrane segments (helical) span residues 18 to 38 (WLGI…IFTF), 41 to 61 (IIIV…FVEV), 84 to 103 (NYTR…LSCI), and 108 to 128 (SLLV…LAAL).

It belongs to the TVP18 family.

It is found in the golgi apparatus membrane. In terms of biological role, golgi membrane protein involved in vesicular trafficking. This chain is Golgi apparatus membrane protein tvp-18 (tvp-18), found in Neurospora crassa (strain ATCC 24698 / 74-OR23-1A / CBS 708.71 / DSM 1257 / FGSC 987).